The primary structure comprises 349 residues: MSKIRVLCVDDSALMRQLMTEIINSHPDMEMVAAAQDPLVARDLIKKFNPQVLTLDVEMPRMDGLDFLEKLMRLRPMPVVMVSSLTGKNSEITMRALELGAIDFVTKPQLGIREGMLAYSELIADKIRTAAKARLPQRVLENKPAMLSHTPLLSSEKLIAIGASTGGTEAIRAVLQPLPPTSPALLITQHMPPGFTRSFAERLNKLCQITVKEAEDGERVLPGHAYIAPGDRHLELARSGANYQVRIHDGPAVNRHRPSVDVLFRSVAQYAGRNAVGVILTGMGNDGAAGLLEMHRAGAYTLAQNEASCVVFGMPREAIAMGGVNDVVELNQISQRMLAQISSGQALRI.

Residues 5–122 enclose the Response regulatory domain; the sequence is RVLCVDDSAL…REGMLAYSEL (118 aa). Asp-56 carries the 4-aspartylphosphate modification. The CheB-type methylesterase domain occupies 152–344; it reads LLSSEKLIAI…QRMLAQISSG (193 aa). Active-site residues include Ser-164, His-190, and Asp-286.

Belongs to the CheB family. Phosphorylated by CheA. Phosphorylation of the N-terminal regulatory domain activates the methylesterase activity.

The protein localises to the cytoplasm. It catalyses the reaction [protein]-L-glutamate 5-O-methyl ester + H2O = L-glutamyl-[protein] + methanol + H(+). The enzyme catalyses L-glutaminyl-[protein] + H2O = L-glutamyl-[protein] + NH4(+). Functionally, involved in chemotaxis. Part of a chemotaxis signal transduction system that modulates chemotaxis in response to various stimuli. Catalyzes the demethylation of specific methylglutamate residues introduced into the chemoreceptors (methyl-accepting chemotaxis proteins or MCP) by CheR. Also mediates the irreversible deamidation of specific glutamine residues to glutamic acid. The chain is Protein-glutamate methylesterase/protein-glutamine glutaminase from Yersinia pestis bv. Antiqua (strain Antiqua).